Here is a 444-residue protein sequence, read N- to C-terminus: Light-independent protochlorophyllide reductase subunit N (444 aa).

3 residues coordinate [4Fe-4S] cluster: C36, C61, and C118.

It belongs to the BchN/ChlN family. Protochlorophyllide reductase is composed of three subunits; BchL, BchN and BchB. Forms a heterotetramer of two BchB and two BchN subunits. [4Fe-4S] cluster serves as cofactor.

It catalyses the reaction chlorophyllide a + oxidized 2[4Fe-4S]-[ferredoxin] + 2 ADP + 2 phosphate = protochlorophyllide a + reduced 2[4Fe-4S]-[ferredoxin] + 2 ATP + 2 H2O. It participates in porphyrin-containing compound metabolism; bacteriochlorophyll biosynthesis (light-independent). Functionally, component of the dark-operative protochlorophyllide reductase (DPOR) that uses Mg-ATP and reduced ferredoxin to reduce ring D of protochlorophyllide (Pchlide) to form chlorophyllide a (Chlide). This reaction is light-independent. The NB-protein (BchN-BchB) is the catalytic component of the complex. The chain is Light-independent protochlorophyllide reductase subunit N from Chloroflexus aurantiacus (strain ATCC 29366 / DSM 635 / J-10-fl).